We begin with the raw amino-acid sequence, 375 residues long: Probable 1-acyl-sn-glycerol-3-phosphate acyltransferase 5 (375 aa).

2 consecutive transmembrane segments (helical) span residues Ile21–Leu41 and Cys57–Asn77. The short motif at His100–Asp105 is the HXXXXD motif element. The next 2 membrane-spanning stretches (helical) occupy residues Tyr312–Phe332 and Trp337–Leu357.

The protein belongs to the 1-acyl-sn-glycerol-3-phosphate acyltransferase family. In terms of tissue distribution, widely expressed at low level.

It is found in the membrane. It carries out the reaction a 1-acyl-sn-glycero-3-phosphate + an acyl-CoA = a 1,2-diacyl-sn-glycero-3-phosphate + CoA. It participates in phospholipid metabolism; CDP-diacylglycerol biosynthesis; CDP-diacylglycerol from sn-glycerol 3-phosphate: step 2/3. Functionally, may convert lysophosphatidic acid (LPA) into phosphatidic acid by incorporating acyl moiety at the 2 position. Has no activity when expressed in bacteria or yeast. The sequence is that of Probable 1-acyl-sn-glycerol-3-phosphate acyltransferase 5 (LPAT5) from Arabidopsis thaliana (Mouse-ear cress).